A 154-amino-acid chain; its full sequence is Egg-lysin (154 aa).

Positions methionine 1–serine 18 are cleaved as a signal peptide.

In terms of assembly, monomer. Homodimer. Molecules associate into dimers and then rapidly dissociate again. Interacts (as a monomer) with the egg vitelline layer protein VERL (via VERL repeats); each VERL chain can bind multiple copies of lysin. Sperm.

It is found in the cytoplasmic vesicle. The protein resides in the secretory vesicle. Its subcellular location is the acrosome lumen. Functionally, creates a 3 um hole in the egg vitelline layer through which the sperm passes. Does not have enzyme activity. Species-specific interaction between the sperm protein lysin and the egg protein VERL exposes a basic surface on lysin that may dissociate the egg vitelline layer via electrostatic repulsion. Plays a role in ensuring species-specific fertilization. The protein is Egg-lysin of Haliotis fulgens (Green abalone).